Consider the following 1013-residue polypeptide: Polyprotein of EF-Ts, chloroplastic (1013 aa).

The transit peptide at 1–43 directs the protein to the chloroplast; that stretch reads MLRELGRTATVKAHGRSVLRPVRGPAGRRQVAFTGVRPSVRVF. An S1 motif 1 domain is found at 64–133; the sequence is GSEYEGTVTT…EKKRVSLELK (70 aa). Positions 141–150 are enriched in acidic residues; sequence SAEESDDIIT. The disordered stretch occupies residues 141 to 163; that stretch reads SAEESDDIITEPDREGADATDDD. One can recognise an S1 motif 2 domain in the interval 227–331; that stretch reads MEEVTGKVAR…DGRGISLTHF (105 aa). The disordered stretch occupies residues 772 to 798; it reads QAKAAAPAAPKKEEPKKEEPKKATVAV. The segment covering 781–793 has biased composition (basic and acidic residues); sequence PKKEEPKKEEPKK.

It belongs to the EF-Ts family. As to quaternary structure, component of the chloroplast ribosome 30S and 70S subunits, as well as polysomes. In terms of assembly, component of the chloroplast ribosome 70S subunit, and at low levels, present in polysomes. Associates transiently with chloroplast polysomes.

Its subcellular location is the plastid. The protein resides in the chloroplast. Associates with the EF-Tu.GDP complex and induces the exchange of GDP to GTP. It remains bound to the aminoacyl-tRNA.EF-Tu.GTP complex up to the GTP hydrolysis stage on the ribosome. Functionally, binds to psbD and psbA mRNAs 5'-untranslated regions (UTRs) in vitro. The chain is Polyprotein of EF-Ts, chloroplastic from Chlamydomonas reinhardtii (Chlamydomonas smithii).